The following is a 287-amino-acid chain: MKSLKELSLRIKNIRSVQKTTKIMQMVSAAKLLQSQKKLSNSKLYISKLHSIISSLMLSVDQELLAKILNVSNNGSYLVFIVASDRGLCGNFNSSIVKFSQNKLITNGKKVDIVFLGKKAFDIGKNRFDSKSILKIENSKGITLKHVEALVGGIDLSKYDKVKVFYSKFYNTFTQKPMLETIKPWSKDSSLIDNSLAGPITDYGYEYEPQNIEFILKSLVQDYVVIALYSALLESATSENSARMVAMESANRNTKEILNKLALLYNRSRQAAITTDLIEVIGGAESL.

This sequence belongs to the ATPase gamma chain family. In terms of assembly, F-type ATPases have 2 components, CF(1) - the catalytic core - and CF(0) - the membrane proton channel. CF(1) has five subunits: alpha(3), beta(3), gamma(1), delta(1), epsilon(1). CF(0) has three main subunits: a, b and c.

It is found in the cell membrane. In terms of biological role, produces ATP from ADP in the presence of a proton gradient across the membrane. The gamma chain is believed to be important in regulating ATPase activity and the flow of protons through the CF(0) complex. This chain is ATP synthase gamma chain, found in Wolbachia sp. subsp. Drosophila simulans (strain wRi).